We begin with the raw amino-acid sequence, 517 residues long: Serine carboxypeptidase ctsa-3.2 (517 aa).

An N-terminal signal peptide occupies residues 1–21 (MWWTSLVFSVLLFDLIFISNC). Residue Ser-172 is part of the active site. Asn-269 is a glycosylation site (N-linked (GlcNAc...) asparagine). Residues Asp-418 and His-485 contribute to the active site.

It belongs to the peptidase S10 family.

This Caenorhabditis elegans protein is Serine carboxypeptidase ctsa-3.2.